Here is a 564-residue protein sequence, read N- to C-terminus: Protein glycosylation K (564 aa).

Residues 1 to 15 (MLKKLFFILSKEDKN) lie on the Cytoplasmic side of the membrane. Residues 16–38 (FLFFLLVFSVFISFIETFAISLV) form a helical membrane-spanning segment. The region spanning 17–319 (LFFLLVFSVF…IITSYHDLLY (303 aa)) is the ABC transmembrane type-1 domain. Over 39–76 (MPFITLASDFSYFDRNKYLISLKEYLNIPVFEIIVYFG) the chain is Extracellular. Positions 46 to 67 (SDFSYFDRNKYLISLKEYLNIP) are important for stimulation of ATPase activity by lipid-linked oligosaccharides and subsequent translocation of lipid-linked oligosaccharides. The chain crosses the membrane as a helical span at residues 77 to 98 (VGLIVFYVFRALLNAYYFHLLA). Residues 99-149 (RFSKGRYHAIAYKVFSKFLNINYEKFTQKNQSEILKSITGEVYNLSTMISS) lie on the Cytoplasmic side of the membrane. The chain crosses the membrane as a helical span at residues 150 to 170 (FLLLMSEIFVVLLLYALMLLI). Residues 171-173 (NYK) lie on the Extracellular side of the membrane. The chain crosses the membrane as a helical span at residues 174-197 (ITLFLSIFMVLNAFILVKILSPII). Topologically, residues 198-254 (KKAGVRREEAMKNFFEILNTNLNNFKFIKLKTKEDGVLSLFKAQSEAFSKANITNES) are cytoplasmic. The helical transmembrane segment at 255 to 276 (VAAVPRIYLEGIGFCVLVFIVV) threads the bilayer. Residues 277 to 292 (FLVLKNESDISGILST) lie on the Extracellular side of the membrane. A helical transmembrane segment spans residues 293-314 (ISIFVLALYRLMPSANRIITSY). Residues 315-564 (HDLLYYHSSL…LEHGKLKEEK (250 aa)) lie on the Cytoplasmic side of the membrane. Residues 349 to 564 (LKICNLSFGY…LEHGKLKEEK (216 aa)) enclose the ABC transporter domain. 382-389 (GESGCGKS) lines the ATP pocket.

Belongs to the ABC transporter superfamily. Homodimer; domain-swapped. Helices that arise in transmembrane regions 4 and 5 from one subunit cross over and contact the nucleotide-binding domain from the other subunit.

The protein localises to the cell inner membrane. The catalysed reaction is ATP + H2O + lipopolysaccharideSide 1 = ADP + phosphate + lipopolysaccharideSide 2.. Its pathway is protein modification; protein glycosylation. Functionally, mediates the ATP-dependent translocation of the undecaprenylpyrophosphate-linked heptasaccharide intermediate across the cell membrane; this is an essential step during the N-linked protein glycosylation pathway. Transport across the membrane is effected via ATP-driven conformation changes. Most likely, only the polar and charged part of the glycolipid enter the substrate-binding cavity, and the lipid tail remains exposed to the membrane lipids during the transmembrane flipping process. The chain is Protein glycosylation K (pglK) from Campylobacter jejuni subsp. jejuni serotype O:2 (strain ATCC 700819 / NCTC 11168).